The sequence spans 49 residues: Large ribosomal subunit protein eL40 (49 aa).

It belongs to the eukaryotic ribosomal protein eL40 family.

In Archaeoglobus fulgidus (strain ATCC 49558 / DSM 4304 / JCM 9628 / NBRC 100126 / VC-16), this protein is Large ribosomal subunit protein eL40.